The following is a 222-amino-acid chain: Exosome complex component Rrp4 (222 aa).

The S1 motif domain occupies 63 to 131 (GDLVIGRVTG…EINRVKLTLR (69 aa)).

Belongs to the RRP4 family. As to quaternary structure, component of the archaeal exosome complex. Forms a trimer of Rrp4 and/or Csl4 subunits. The trimer associates with a hexameric ring-like arrangement composed of 3 Rrp41-Rrp42 heterodimers.

The protein localises to the cytoplasm. In terms of biological role, non-catalytic component of the exosome, which is a complex involved in RNA degradation. Increases the RNA binding and the efficiency of RNA degradation. Confers strong poly(A) specificity to the exosome. This is Exosome complex component Rrp4 from Methanosphaera stadtmanae (strain ATCC 43021 / DSM 3091 / JCM 11832 / MCB-3).